Consider the following 339-residue polypeptide: MVIQKNWQELIKPNKLEVVPGHDPKRVATVVAEPLERGFGTTLGNALRRVLLSSLQGAAVTSVHIDGVLHEFSSIPGVREDVTDIVLNIKTIAIRSNSDAPKRMTLRKTGPGLVTAGDISTIGDIQILNPDLVLCTLDEGAEIRMEFTVATGKGYVPADRNRPEDAPIGLIPVDALFSPVTKVSYRIENTREGQDLDKDKLTMTVETNGAVSPEDALAYAARIIQDQLQIFVNFEEPRKEEAAPLAPQLPFNPALLKKVDELELSVRSANCLKNDNIVYIGDLIQKTEAEMLRTPNFGRKSLNEIKEVLAAMGLHLGMDVPGWPPENIEDLAKRFEEHY.

An alpha N-terminal domain (alpha-NTD) region spans residues methionine 1 to glutamate 235. Positions phenylalanine 251 to tyrosine 339 are alpha C-terminal domain (alpha-CTD).

It belongs to the RNA polymerase alpha chain family. Homodimer. The RNAP catalytic core consists of 2 alpha, 1 beta, 1 beta' and 1 omega subunit. When a sigma factor is associated with the core the holoenzyme is formed, which can initiate transcription.

The enzyme catalyses RNA(n) + a ribonucleoside 5'-triphosphate = RNA(n+1) + diphosphate. Functionally, DNA-dependent RNA polymerase catalyzes the transcription of DNA into RNA using the four ribonucleoside triphosphates as substrates. The polypeptide is DNA-directed RNA polymerase subunit alpha (Methylobacterium sp. (strain 4-46)).